A 149-amino-acid chain; its full sequence is Protein FAM72A (149 aa).

This sequence belongs to the FAM72 family. Interacts with UNG. As to expression, expressed at high levels in stomach and also in kidney and, at low levels, in heart (at protein level). In the stomach, highly expressed in foveolar cells, parietal cells and chief cells (at protein level). In kidney, expressed in endothelial cells, mesangial and epithelial cells (parietal and visceral epithelium) around glomerulus (at protein level).

It localises to the cytoplasm. The protein localises to the mitochondrion. May play a role in the regulation of cellular reactive oxygen species metabolism. May participate in cell growth regulation. This is Protein FAM72A (Fam72a) from Rattus norvegicus (Rat).